The following is a 443-amino-acid chain: Xaa-Pro dipeptidase (443 aa).

Positions 246, 257, 339, 384, and 423 each coordinate Mn(2+).

The protein belongs to the peptidase M24B family. Bacterial-type prolidase subfamily. Mn(2+) serves as cofactor.

The enzyme catalyses Xaa-L-Pro dipeptide + H2O = an L-alpha-amino acid + L-proline. In terms of biological role, splits dipeptides with a prolyl residue in the C-terminal position. The chain is Xaa-Pro dipeptidase from Yersinia pseudotuberculosis serotype I (strain IP32953).